A 232-amino-acid chain; its full sequence is MLGESREEAERIVRAAREEAERIVRAAREEAERIESSSLAALSQASRNVLLSFQDSVTRSLRAIISMETAQAYDAGVLRELIPRVVSAWVQAEGDKLELILSPADLRTLEGVFCAALQEQLSAGVELRSDDCLTAGFRIVPAEGGSYYDFSAAAVAQLFSSYVSARVAEVLSLLRRSCDVFLLLPYNAATISSMRRGASFALSGFFGLCATFLGSAGCCGAWKYLVVSRAGA.

The protein belongs to the V-ATPase E subunit family.

Produces ATP from ADP in the presence of a proton gradient across the membrane. The sequence is that of V-type ATP synthase subunit E (atpE) from Treponema pallidum (strain Nichols).